The primary structure comprises 620 residues: 1-deoxy-D-xylulose-5-phosphate synthase (620 aa).

Residues histidine 75 and 116 to 118 (AHS) each bind thiamine diphosphate. Residue aspartate 147 coordinates Mg(2+). Thiamine diphosphate-binding positions include 148-149 (GA), asparagine 177, tyrosine 284, and glutamate 366. Mg(2+) is bound at residue asparagine 177.

The protein belongs to the transketolase family. DXPS subfamily. Homodimer. The cofactor is Mg(2+). Thiamine diphosphate serves as cofactor.

The catalysed reaction is D-glyceraldehyde 3-phosphate + pyruvate + H(+) = 1-deoxy-D-xylulose 5-phosphate + CO2. It participates in metabolic intermediate biosynthesis; 1-deoxy-D-xylulose 5-phosphate biosynthesis; 1-deoxy-D-xylulose 5-phosphate from D-glyceraldehyde 3-phosphate and pyruvate: step 1/1. In terms of biological role, catalyzes the acyloin condensation reaction between C atoms 2 and 3 of pyruvate and glyceraldehyde 3-phosphate to yield 1-deoxy-D-xylulose-5-phosphate (DXP). The chain is 1-deoxy-D-xylulose-5-phosphate synthase from Bordetella avium (strain 197N).